The sequence spans 95 residues: Acylphosphatase (95 aa).

Positions 10-95 constitute an Acylphosphatase-like domain; the sequence is CIHVTVSGKV…VEDYSDFRVR (86 aa). Residues Arg-25 and Asn-43 contribute to the active site.

Belongs to the acylphosphatase family.

It carries out the reaction an acyl phosphate + H2O = a carboxylate + phosphate + H(+). This is Acylphosphatase (acyP) from Coxiella burnetii (strain RSA 493 / Nine Mile phase I).